A 204-amino-acid polypeptide reads, in one-letter code: Urease accessory protein UreG (204 aa).

11-18 (GPVGAGKT) contacts GTP.

It belongs to the SIMIBI class G3E GTPase family. UreG subfamily. Homodimer. UreD, UreF and UreG form a complex that acts as a GTP-hydrolysis-dependent molecular chaperone, activating the urease apoprotein by helping to assemble the nickel containing metallocenter of UreC. The UreE protein probably delivers the nickel.

It is found in the cytoplasm. Facilitates the functional incorporation of the urease nickel metallocenter. This process requires GTP hydrolysis, probably effectuated by UreG. The sequence is that of Urease accessory protein UreG from Staphylococcus epidermidis (strain ATCC 35984 / DSM 28319 / BCRC 17069 / CCUG 31568 / BM 3577 / RP62A).